The primary structure comprises 459 residues: Protoheme IX farnesyltransferase (459 aa).

The interval 1–184 (MSRNTATQFV…AYVQLMKPRL (184 aa)) is unknown. 12 consecutive transmembrane segments (helical) span residues 9-29 (FVAVLAAAAMGVYSLLVLGAT), 66-86 (AAALTGLAVVGAAVLAWRTGA), 93-113 (AVTLALALYPVQVVIGAYTAM), 123-143 (VHLTLGVGIFASLVVALAWTL), 184-204 (LMWLLCLVAGAGMALASSQLG), 211-231 (AATVVLTLGGGVLSIGASGTF), 262-282 (LAFGVVLGVASLAAFAAVNLL), 284-304 (AVLGLTAIAFYSIVYTLVLKP), 325-345 (WVAVTGAVGVGGVVLAGVIFL), 382-402 (HIVYYIGATLASAVVLAELTG), 403-423 (LGPLYAATTVLLGAVFLYFAI), and 438-458 (FHASNAYLGCLLVAVVLDTMV). Positions 185–459 (MWLLCLVAGA…VAVVLDTMVV (275 aa)) are protoheme IX prenyltransferase.

This sequence in the C-terminal section; belongs to the UbiA prenyltransferase family. Protoheme IX farnesyltransferase subfamily.

The protein resides in the cell membrane. It catalyses the reaction heme b + (2E,6E)-farnesyl diphosphate + H2O = Fe(II)-heme o + diphosphate. Its pathway is porphyrin-containing compound metabolism; heme O biosynthesis; heme O from protoheme: step 1/1. In terms of biological role, converts heme B (protoheme IX) to heme O by substitution of the vinyl group on carbon 2 of heme B porphyrin ring with a hydroxyethyl farnesyl side group. The sequence is that of Protoheme IX farnesyltransferase (ctaB) from Halobacterium salinarum (strain ATCC 29341 / DSM 671 / R1).